A 683-amino-acid polypeptide reads, in one-letter code: Methionine--tRNA ligase (683 aa).

Positions Tyr-15–Asn-25 match the 'HIGH' region motif. Residues Lys-311–Ser-315 carry the 'KMSKS' region motif. Lys-314 serves as a coordination point for ATP. The region spanning Asp-581 to Ser-683 is the tRNA-binding domain.

This sequence belongs to the class-I aminoacyl-tRNA synthetase family. MetG type 2B subfamily. Homodimer.

Its subcellular location is the cytoplasm. The enzyme catalyses tRNA(Met) + L-methionine + ATP = L-methionyl-tRNA(Met) + AMP + diphosphate. Its function is as follows. Is required not only for elongation of protein synthesis but also for the initiation of all mRNA translation through initiator tRNA(fMet) aminoacylation. The protein is Methionine--tRNA ligase of Lactiplantibacillus plantarum (strain ATCC BAA-793 / NCIMB 8826 / WCFS1) (Lactobacillus plantarum).